The sequence spans 78 residues: MKTLLLTLLVVTIVCLDLGYSLKCYQHGKVVTCHRDMKFCYHNTGMPFRNLKLILQGCSSSCSETENNKCCSTDRCNK.

The first 21 residues, 1–21, serve as a signal peptide directing secretion; it reads MKTLLLTLLVVTIVCLDLGYS. Cystine bridges form between Cys24/Cys40, Cys33/Cys58, Cys62/Cys70, and Cys71/Cys76.

This sequence belongs to the three-finger toxin family. Short-chain subfamily. Mambalgin sub-subfamily. In terms of tissue distribution, expressed by the venom gland.

It localises to the secreted. Functionally, this three-finger toxin inhibits ASIC channels. It acts as a gating modifier toxin by decreasing the apparent proton sensitivity of activation and by slightly increasing the apparent proton sensitivity for inactivation. It binds more tightly to the closed state and to a much lesser extent the inactivated/desensitized state of ASIC1a isoform of ASIC1. It interacts directly with the outside surface of the thumb domain of chicken ASIC1a (ASIC1a), but does not insert into the acidic pocket as suggested for mambalgin-2. This binding leads to relocation of the thumb domain that could disrupt the acidic pocket of cASIC1a. It reversibly inhibits rat ASIC1a (IC(50)=3.4-55 nM), rat ASIC1a-ASIC2b (IC(50)=61 nM), rat ASIC1a-ASIC1b (IC(50)=72 nM), human ASIC1a (IC(50)=127-580 nM), chicken ASIC1a (IC(50)=123.6 nM), rat ASIC1b (IC(50)=22.2-203 nM), rat ASIC1a-ASIC2a (IC(50)=152-252 nM). In vivo, it shows a potent naloxone-resistant analgesic effect against acute and inflammatory pain upon central and peripheral injection. In addition, it also has an opioid-independent effect on both thermal and mechanical inflammatory pain after systemic administration and is effective against neuropathic pain. The polypeptide is Mambalgin-1 (Dendroaspis polylepis polylepis (Black mamba)).